A 333-amino-acid chain; its full sequence is Lipoyl synthase (333 aa).

Positions 1–29 are disordered; it reads MTDSAAGATEVATPATPSNKPYDATAKQK. C80, C85, C91, C106, C110, C113, and S320 together coordinate [4Fe-4S] cluster. A Radical SAM core domain is found at 91 to 309; sequence CFGKGTATFM…EEKAYEMGFT (219 aa).

The protein belongs to the radical SAM superfamily. Lipoyl synthase family. It depends on [4Fe-4S] cluster as a cofactor.

It is found in the cytoplasm. It catalyses the reaction [[Fe-S] cluster scaffold protein carrying a second [4Fe-4S](2+) cluster] + N(6)-octanoyl-L-lysyl-[protein] + 2 oxidized [2Fe-2S]-[ferredoxin] + 2 S-adenosyl-L-methionine + 4 H(+) = [[Fe-S] cluster scaffold protein] + N(6)-[(R)-dihydrolipoyl]-L-lysyl-[protein] + 4 Fe(3+) + 2 hydrogen sulfide + 2 5'-deoxyadenosine + 2 L-methionine + 2 reduced [2Fe-2S]-[ferredoxin]. The protein operates within protein modification; protein lipoylation via endogenous pathway; protein N(6)-(lipoyl)lysine from octanoyl-[acyl-carrier-protein]: step 2/2. Its function is as follows. Catalyzes the radical-mediated insertion of two sulfur atoms into the C-6 and C-8 positions of the octanoyl moiety bound to the lipoyl domains of lipoate-dependent enzymes, thereby converting the octanoylated domains into lipoylated derivatives. This is Lipoyl synthase from Ralstonia pickettii (strain 12J).